Reading from the N-terminus, the 673-residue chain is MASPAPPVAEELPGPASRRLYSRMEASCLELALEGERLCKAGDFKAGVAFFEAAVQVGTEDLKTLSAIYSQLGNAYFYLKEYARALQFHKHDLLLARTIGDRMGEAKASGNLGNTLKVLGRFDEAIVCCQRHLDIAQEQGDKVGEARALYNIGNVYHAKGKQLSWNAAQDPGHLPPDVRETLHRASEFYERNLSLVKELGDRAAQGRAYGNLGNTHYLLGNFTEATTFHKERLAIAKEFGDKAAERRAYSNLGNAHIFLGRFDVAAEHYKKTLQLSRQLRDQAVEAQACYSLGNTYTLLQDYERAAEYHLRHLVIAQELADRVGEGRACWSLGNAYVSMGSPAQALTFAKKHLQISQEIGDRNGELTARMNIAHLQLALGRLTSPAAAEKPDLAGYEAQGARPKRTQRLSAETWDLLRLPLDREQNGETHHTGDWRGPGRDSLPLPMRSRKYQEGPDAIERRPREGSHSPLDSADVRVQVPRTGIPRAPSSDEECFFDLLSKFQSSRMDDQRCPLEEGQAGAAEATAAPSVEDRAAQSSVTASPQTEEFFDLIASSQSRRLDDQRASVGSLPGLRITLNNVGHLRGDGDAQEPGDEFFNMLIKYQSSRIDDQRCPPPDVLPRGPTMPDEDFFSLIQRVQAKRMDEQRVDLAGSPEQEASGLPDPQQQCPPGAS.

Residues 1 to 507 (MASPAPPVAE…DLLSKFQSSR (507 aa)) are mediates association with membranes. TPR repeat units follow at residues 28–61 (CLELALEGERLCKAGDFKAGVAFFEAAVQVGTED), 66–99 (SAIYSQLGNAYFYLKEYARALQFHKHDLLLARTI), 106–139 (AKASGNLGNTLKVLGRFDEAIVCCQRHLDIAQEQ), 146–178 (ARALYNIGNVYHAKGKQLSWNAAQDPGHLPPDV), 180–199 (ETLHRASEFYERNLSLVKEL), 206–239 (GRAYGNLGNTHYLLGNFTEATTFHKERLAIAKEF), 246–279 (RRAYSNLGNAHIFLGRFDVAAEHYKKTLQLSRQL), 286–319 (AQACYSLGNTYTLLQDYERAAEYHLRHLVIAQEL), and 326–359 (GRACWSLGNAYVSMGSPAQALTFAKKHLQISQEI). The tract at residues 361–485 (DRNGELTARM…VRVQVPRTGI (125 aa)) is interaction with STK11/LKB1. At Ser-410 the chain carries Phosphoserine. Arg-418 is subject to Omega-N-methylarginine. Over residues 420–439 (PLDREQNGETHHTGDWRGPG) the composition is skewed to basic and acidic residues. The interval 420-475 (PLDREQNGETHHTGDWRGPGRDSLPLPMRSRKYQEGPDAIERRPREGSHSPLDSAD) is disordered. Phosphoserine is present on residues Ser-442, Ser-467, Ser-469, Ser-490, and Ser-491. The span at 451–467 (KYQEGPDAIERRPREGS) shows a compositional bias: basic and acidic residues. Residues 493-515 (EECFFDLLSKFQSSRMDDQRCPL) form the GoLoco 1 domain. The interval 508–531 (MDDQRCPLEEGQAGAAEATAAPSV) is disordered. Over residues 516-528 (EEGQAGAAEATAA) the composition is skewed to low complexity. Residues Ser-543 and Ser-567 each carry the phosphoserine modification. GoLoco domains are found at residues 546-568 (TEEFFDLIASSQSRRLDDQRASV), 594-616 (GDEFFNMLIKYQSSRIDDQRCPP), and 628-650 (DEDFFSLIQRVQAKRMDEQRVDL). The interval 644–673 (DEQRVDLAGSPEQEASGLPDPQQQCPPGAS) is disordered. The residue at position 653 (Ser-653) is a Phosphoserine. Positions 664–673 (PQQQCPPGAS) are enriched in polar residues.

Belongs to the GPSM family. Interacts with GNAI1 and GNAI2 preferentially in their GDP-bound state. May also interact with GNAO1. Interacts with INSC/inscuteable and FRMPD1. Interacts with GNAI3. Interacts with STK11/LKB1 and MACF1. Post-translationally, phosphorylation regulates interaction with G(i/o) alpha. Expressed in neural progenitor cells (at protein level).

Its subcellular location is the cytoplasm. The protein localises to the cytosol. It localises to the endoplasmic reticulum membrane. It is found in the golgi apparatus membrane. The protein resides in the cell membrane. Its function is as follows. Guanine nucleotide dissociation inhibitor (GDI) which functions as a receptor-independent activator of heterotrimeric G-protein signaling. Keeps G(i/o) alpha subunit in its GDP-bound form thus uncoupling heterotrimeric G-proteins signaling from G protein-coupled receptors. Controls spindle orientation and asymmetric cell fate of cerebral cortical progenitors. May also be involved in macroautophagy in intestinal cells. May play a role in drug addiction. The protein is G-protein-signaling modulator 1 (Gpsm1) of Mus musculus (Mouse).